A 151-amino-acid polypeptide reads, in one-letter code: Deoxyuridine 5'-triphosphate nucleotidohydrolase (151 aa).

Substrate is bound by residues 70-72 (RSG), N83, 87-89 (LID), and M97.

The protein belongs to the dUTPase family. Mg(2+) is required as a cofactor.

It carries out the reaction dUTP + H2O = dUMP + diphosphate + H(+). Its pathway is pyrimidine metabolism; dUMP biosynthesis; dUMP from dCTP (dUTP route): step 2/2. This enzyme is involved in nucleotide metabolism: it produces dUMP, the immediate precursor of thymidine nucleotides and it decreases the intracellular concentration of dUTP so that uracil cannot be incorporated into DNA. This chain is Deoxyuridine 5'-triphosphate nucleotidohydrolase, found in Ectopseudomonas mendocina (strain ymp) (Pseudomonas mendocina).